The chain runs to 158 residues: uncharacterized protein (158 aa).

2 helical membrane passes run 10-30 (LFFI…LNHF) and 40-60 (YITF…NFFL).

It localises to the membrane. This is an uncharacterized protein from Schizosaccharomyces pombe (strain 972 / ATCC 24843) (Fission yeast).